The primary structure comprises 251 residues: Small ribosomal subunit protein uS2 (251 aa).

The protein belongs to the universal ribosomal protein uS2 family.

This chain is Small ribosomal subunit protein uS2, found in Nitrosomonas europaea (strain ATCC 19718 / CIP 103999 / KCTC 2705 / NBRC 14298).